An 85-amino-acid polypeptide reads, in one-letter code: Ice-structuring protein 4 (85 aa).

A signal peptide spans 1-21 (MRITEANPDPDAKAVPAAAAP).

This sequence belongs to the type-I AFP family.

The protein resides in the secreted. In terms of biological role, contributes to protect fish blood from freezing at subzero sea water temperatures. Lowers the blood freezing point. Binds to nascent ice crystals and prevents further growth. The sequence is that of Ice-structuring protein 4 from Pseudopleuronectes americanus (Winter flounder).